The following is a 181-amino-acid chain: uncharacterized protein (181 aa).

A signal peptide spans methionine 1–threonine 22.

This is an uncharacterized protein from Halorubrum pleomorphic virus 1 (HRPV-1).